The chain runs to 257 residues: A-factor type gamma-butyrolactone 1'-reductase (1S-forming) (257 aa).

The active-site Proton acceptor is the tyrosine 161.

This sequence belongs to the short-chain dehydrogenases/reductases (SDR) family. As to quaternary structure, homodimer.

The enzyme catalyses a (3R,4R)-3-[(1S)-1-hydroxyalkyl]-4-(hydroxymethyl)oxolan-2-one + NADP(+) = a (3R,4R)-3-alkanoyl-4-(hydroxymethyl)oxolan-2-one + NADPH + H(+). Its function is as follows. Involved in the biosynthesis of virginiae butanolide (VB), which regulates the production of antibiotic virginiamycin. Catalyzes the reduction of 6-dehydro-VB-A to VB-A, the last catalytic step in VB biosynthesis. In vitro, can use various synthetic A-factor-type analogs. This chain is A-factor type gamma-butyrolactone 1'-reductase (1S-forming), found in Streptomyces virginiae (Streptomyces cinnamonensis).